The following is a 226-amino-acid chain: UPF0319 protein YPO1442/y2728/YP_1333 (226 aa).

The N-terminal stretch at 1-20 (MKLGLVAGMLAVCFSFSSVA) is a signal peptide.

The protein belongs to the UPF0319 family.

In Yersinia pestis, this protein is UPF0319 protein YPO1442/y2728/YP_1333.